Consider the following 360-residue polypeptide: NAD(P)H-quinone oxidoreductase subunit 1, chloroplastic (360 aa).

The next 8 helical transmembrane spans lie at 30-50 (FLPI…LVWL), 98-118 (FSIG…VIPF), 127-147 (FNIG…GLLM), 165-185 (AAQS…ISLL), 203-223 (FWGW…ISSL), 248-268 (YSGI…LISS), 297-317 (IFGT…FLFI), and 340-360 (FLLP…VFSL).

It belongs to the complex I subunit 1 family. In terms of assembly, NDH is composed of at least 16 different subunits, 5 of which are encoded in the nucleus.

The protein resides in the plastid. It is found in the chloroplast thylakoid membrane. The enzyme catalyses a plastoquinone + NADH + (n+1) H(+)(in) = a plastoquinol + NAD(+) + n H(+)(out). It carries out the reaction a plastoquinone + NADPH + (n+1) H(+)(in) = a plastoquinol + NADP(+) + n H(+)(out). Functionally, NDH shuttles electrons from NAD(P)H:plastoquinone, via FMN and iron-sulfur (Fe-S) centers, to quinones in the photosynthetic chain and possibly in a chloroplast respiratory chain. The immediate electron acceptor for the enzyme in this species is believed to be plastoquinone. Couples the redox reaction to proton translocation, and thus conserves the redox energy in a proton gradient. This chain is NAD(P)H-quinone oxidoreductase subunit 1, chloroplastic, found in Aethionema grandiflorum (Persian stone-cress).